Consider the following 662-residue polypeptide: p-hydroxybenzoic acid efflux pump subunit AaeB (662 aa).

Helical transmembrane passes span 22–42 (FAFKLTFAVVLSLFLGFHLQL), 52–72 (AAIVAGGPAFVAGGEPFSGAI), 78–98 (LRIVGTFIGCIGALAIIISTI), 102–122 (IVMMLLCCIWAGLCNWISSLV), 129–149 (IFGLAGYTTLIIILATQGTPM), 161–181 (EIVLGIACVIFADLLFAPRSI), 378–398 (LFWLSTGWSSGGICMMMIAVV), 415–435 (FLYGTIYSLPLGALMFMFILP), 439–459 (QSILLLCLSLGAMTFFLGVEV), 467–487 (LGALISTINVLLLNNPMTFNI), and 491–511 (LDNAIGQIIGCFVALMVILLI).

The protein belongs to the aromatic acid exporter ArAE (TC 2.A.85) family.

The protein localises to the cell inner membrane. Its function is as follows. Forms an efflux pump with AaeA. Could function as a metabolic relief valve, allowing to eliminate certain compounds when they accumulate to high levels in the cell. The sequence is that of p-hydroxybenzoic acid efflux pump subunit AaeB from Pectobacterium parmentieri (strain WPP163) (Pectobacterium wasabiae (strain WPP163)).